A 27-amino-acid chain; its full sequence is uncharacterized protein (27 aa).

The protein localises to the plastid. Its subcellular location is the chloroplast. This is an uncharacterized protein from Marchantia polymorpha (Common liverwort).